Reading from the N-terminus, the 1197-residue chain is EFRQRDPSPSFRWVKDGKQFGEVLSESGTLTPHPTMDLHFYQGTYRCYAANELGTAVSNLVHLTTEPVPSLAKVKKQKRRAYEVGESAVLRCNPPKSSVTPKIHWMDMQFHHIPLNERVTISRDGNLYFANLIANDSRDDYTCNAHYINASIILPKEPMSIYVTPSNSVVKNRRAKLHHPAGARSSYLVLRGQTLTLQCIPEGLPTPEVHWDRIDSALSPNRTKKLYNNRWLQIDNVLESDDGEYVCTARNSENSVKHHYTVTVEAAPYWTRSPEEHLYAPGETVRLDCKADGIPAPNITWSINGVPVSGTDVDPRRRVSSGKLILSNVEFSDTAVYQCEAVNKHGSILINTHVHVVELPAQILTPDERLYQATAGQTVMLDCRTFGSPLPKIHWEILDSIPALSNAKISQTTNGSLKISNVSEEDSNRYTCSVSETNKSISADVEVLNRTKIVGPPQNLHVIRGSDAILHCKYTVDHNLKSPTVQWNKDGHKITASTSNDKYHEIEGSLKVLDVQMEDMGIYSCEVSTTLDSDTASGYITVQDKPDPPQSLKLSEKMERSVTISWMPSVENNSPVTEYVIEMNEGETPDEGQWQKYRSVSQDIDSWRSICSYSKYHFQIRAVNSIGTSAPTESSLSYSTPAAKPDTNPENVMTLSTDPKSMIISWQEMDRRQFNGPGFQYKVFWRRAADSGAHWTESSVSNPPLMVNNTGTFVSFEIKVQAVNDLGAAPEPLTVIGYSGEDFPLEAPSALSVTELQKTSVMVRWSPVRPESVRGHLLGYKIYLRMKGSQWETPGRAVSSSGNPTVIEVPADAAEKIVSDLQFYSDYTLTITAFNSKGEGPHSEESFSTPEGAPGPVLFLPFDSPSESEITLRWEAPHKPNGEIRGYLLQYQEVVIGSESPQHVESIDLPAVTEFTLKNLNPESRYTFHLSARNDAGDGAPAIQSGATLLDGEPPSVINMTAGETSVNLSWVPGDRHRNLGFSFRYLKKIEGAEWEESEKINSTQAFYQLQGLDSGVIYHLQVLSGNTSYDWDFKTIYSPEWHKSPRNFATEGWFIGLISALVLLLLVLLLLCYIKKSKGGKYSVKDKEEGQGDAANQKLKDDAFGEYRSLESDMEKCSISQPSGCESKRSSNDSLADYGDSVDIQFNEDGSFIGQYSGRRDPRGHDSSGAVSPVNPNMPPPSHSFPTSVTGILGPN.

5 consecutive Ig-like C2-type domains span residues 1-58 (EFRQ…TAVS), 69-160 (PSLA…EPMS), 165-263 (PSNS…YTVT), 268-355 (PYWT…THVH), and 360-442 (PAQI…KSIS). At 1-1054 (EFRQRDPSPS…SPRNFATEGW (1054 aa)) the chain is on the extracellular side. A disulfide bridge links C92 with C143. N-linked (GlcNAc...) asparagine glycosylation is found at N135, N149, N221, N298, N414, N421, N438, and N449. 3 disulfides stabilise this stretch: C199–C247, C289–C339, and C383–C432. The Ig-like C2-type 6 domain maps to 451–541 (TKIVGPPQNL…DSDTASGYIT (91 aa)). C472 and C525 are disulfide-bonded. Fibronectin type-III domains are found at residues 548 to 643 (PPQS…TPAA), 645 to 742 (PDTN…SGED), 747 to 852 (APSA…TPEG), 853 to 952 (APGP…LLDG), and 953 to 1048 (EPPS…SPRN). Residues 630 to 640 (APTESSLSYST) show a composition bias toward polar residues. The interval 630 to 655 (APTESSLSYSTPAAKPDTNPENVMTL) is disordered. The N-linked (GlcNAc...) asparagine glycan is linked to N708. Residues N959, N968, N1002, and N1027 are each glycosylated (N-linked (GlcNAc...) asparagine). Residues 1055-1075 (FIGLISALVLLLLVLLLLCYI) traverse the membrane as a helical segment. Residues 1076–1197 (KKSKGGKYSV…TSVTGILGPN (122 aa)) lie on the Cytoplasmic side of the membrane. 2 disordered regions span residues 1115–1135 (MEKCSISQPSGCESKRSSNDS) and 1154–1197 (IGQY…LGPN).

This sequence belongs to the immunoglobulin superfamily. L1/neurofascin/NgCAM family. As to expression, expressed in postmitotic neurons in 16-36 hours embryos, including those in the brain, cranial ganglia and otic and olfactory placodes, and in all classes of spinal neurons.

Its subcellular location is the cell membrane. The protein resides in the cell projection. It localises to the growth cone. In terms of biological role, cell adhesion molecule with an important role in the development of the nervous system. Involved in neuron-neuron adhesion, neurite fasciculation, outgrowth of neurites, etc. Binds to axonin on neurons. The protein is Neural cell adhesion molecule L1.1 (nadl1.1) of Danio rerio (Zebrafish).